We begin with the raw amino-acid sequence, 153 residues long: Regulatory protein RecX (153 aa).

Belongs to the RecX family.

It is found in the cytoplasm. Functionally, modulates RecA activity. This chain is Regulatory protein RecX, found in Mannheimia succiniciproducens (strain KCTC 0769BP / MBEL55E).